The following is a 421-amino-acid chain: ATP-dependent RNA helicase RhlB (421 aa).

The Q motif motif lies at 9 to 37 (QKFSDFALHPKVVEVLEKKGFHNCTPIQA). In terms of domain architecture, Helicase ATP-binding spans 40 to 219 (LPLTLAGRDV…FEQMNNAEYI (180 aa)). 53–60 (AQTGTGKT) contacts ATP. A DEAD box motif is present at residues 165–168 (DEAD). A Helicase C-terminal domain is found at 245–390 (RLLQTLIEEE…VSKYNPDALM (146 aa)). A disordered region spans residues 392-421 (DLPKPLRLTRPRTGNGPRRTGAPRNRRRSG). Over residues 402–414 (PRTGNGPRRTGAP) the composition is skewed to low complexity.

The protein belongs to the DEAD box helicase family. RhlB subfamily. Component of the RNA degradosome, which is a multiprotein complex involved in RNA processing and mRNA degradation.

The protein resides in the cytoplasm. The enzyme catalyses ATP + H2O = ADP + phosphate + H(+). Functionally, DEAD-box RNA helicase involved in RNA degradation. Has RNA-dependent ATPase activity and unwinds double-stranded RNA. This chain is ATP-dependent RNA helicase RhlB, found in Shigella boydii serotype 18 (strain CDC 3083-94 / BS512).